The chain runs to 530 residues: MNNARPIHRALLSVSDKTGIVEFAKALAERGVELLSTGGTARLLAEQGLTVTEVSDYTGFPEMMDGRVKTLHPKVHGGILGRRGQDDAVMNTHGIQPIDMVVVNLYPFAQTVANPNCTLADAVENIDIGGPTMVRSAAKNHKDVAIVVNAHDYDRVIREMDANHNSLTLATRFDLAIAAFEHTAAYDGMIANYFGTLVPSYGDNKEGDEESKFPRTFNAQFIKKQDMRYGENSHQAAAFYVEANPQEASVATARQIQGKALSYNNIADTDAALECVKEFSEPACVIVKHANPCGVALGDDLLQAYNRAYQTDPTSAFGGIIAFNRELDGETARAIIERQFVEVIIAPKVSQAAIDIVAAKQNVRLLECGEWQGQTTGFDLKRVNGGLLVQDRDQGMVAQDDLQVVSTRQPSDAELKDALFCWKVAKYVKSNAIVYAKGDMAIGIGAGQMSRVYSAKIAGIKAADEGLEVAGSVMASDAFFPFRDGIDAAAEAGITCVIQPGGSMRDQEVIDAANEHGMAMIFTGMRHFRH.

One can recognise an MGS-like domain in the interval 1–148; that stretch reads MNNARPIHRA…KNHKDVAIVV (148 aa).

This sequence belongs to the PurH family.

It carries out the reaction (6R)-10-formyltetrahydrofolate + 5-amino-1-(5-phospho-beta-D-ribosyl)imidazole-4-carboxamide = 5-formamido-1-(5-phospho-D-ribosyl)imidazole-4-carboxamide + (6S)-5,6,7,8-tetrahydrofolate. The enzyme catalyses IMP + H2O = 5-formamido-1-(5-phospho-D-ribosyl)imidazole-4-carboxamide. The protein operates within purine metabolism; IMP biosynthesis via de novo pathway; 5-formamido-1-(5-phospho-D-ribosyl)imidazole-4-carboxamide from 5-amino-1-(5-phospho-D-ribosyl)imidazole-4-carboxamide (10-formyl THF route): step 1/1. It functions in the pathway purine metabolism; IMP biosynthesis via de novo pathway; IMP from 5-formamido-1-(5-phospho-D-ribosyl)imidazole-4-carboxamide: step 1/1. The protein is Bifunctional purine biosynthesis protein PurH of Vibrio cholerae serotype O1 (strain ATCC 39541 / Classical Ogawa 395 / O395).